Here is a 202-residue protein sequence, read N- to C-terminus: Large ribosomal subunit protein bL25 (202 aa).

This sequence belongs to the bacterial ribosomal protein bL25 family. CTC subfamily. Part of the 50S ribosomal subunit; part of the 5S rRNA/L5/L18/L25 subcomplex. Contacts the 5S rRNA. Binds to the 5S rRNA independently of L5 and L18.

Functionally, this is one of the proteins that binds to the 5S RNA in the ribosome where it forms part of the central protuberance. The polypeptide is Large ribosomal subunit protein bL25 (Clostridium perfringens (strain ATCC 13124 / DSM 756 / JCM 1290 / NCIMB 6125 / NCTC 8237 / Type A)).